The primary structure comprises 117 residues: Large ribosomal subunit protein bL20 (117 aa).

It belongs to the bacterial ribosomal protein bL20 family.

Binds directly to 23S ribosomal RNA and is necessary for the in vitro assembly process of the 50S ribosomal subunit. It is not involved in the protein synthesizing functions of that subunit. This Acetivibrio thermocellus (strain ATCC 27405 / DSM 1237 / JCM 9322 / NBRC 103400 / NCIMB 10682 / NRRL B-4536 / VPI 7372) (Clostridium thermocellum) protein is Large ribosomal subunit protein bL20.